Consider the following 282-residue polypeptide: S-formylglutathione hydrolase (282 aa).

Lys-4 bears the N6-succinyllysine mark. Catalysis depends on Ser-149, which acts as the Charge relay system. Residue Lys-200 is modified to N6-acetyllysine. Active-site charge relay system residues include Asp-226 and His-260.

Belongs to the esterase D family. As to quaternary structure, homodimer.

Its subcellular location is the cytoplasm. The protein resides in the cytoplasmic vesicle. The enzyme catalyses S-formylglutathione + H2O = formate + glutathione + H(+). Serine hydrolase involved in the detoxification of formaldehyde. The sequence is that of S-formylglutathione hydrolase (Esd) from Rattus norvegicus (Rat).